The chain runs to 289 residues: MIFAKGHGTQNDFVLLPDVDAELVLTAARVAALCDRRKGLGADGVLRVTTAGAAQAVGVLDSLPEGVRVTDWYMDYRNADGSAAQMCGNGVRVFAHYLRASGLEVRDEFVVGSLAGPRPVTCHHVEAAYADVSVDMGKANRLGAGEAVVGGRRFHGLAVDVGNPHLACVDSQLTVDGLAALDVGAPVSFDGAQFPDGVNVEVLTAPVDGAVWMRVHERGVGETRSCGTGTVAAAVAALAAVGSPTGTLTVHVPGGEVVVTVTDATSFLRGPSVLVARGDLADDWWNAMG.

Substrate-binding residues include Asn11 and Asn78. Residue Cys87 is the Proton donor of the active site. Substrate is bound by residues 88–89 (GN), Asn163, Asn199, and 217–218 (ER). The active-site Proton acceptor is Cys226. Residue 227-228 (GT) participates in substrate binding.

It belongs to the diaminopimelate epimerase family. As to quaternary structure, homodimer.

It is found in the cytoplasm. It carries out the reaction (2S,6S)-2,6-diaminopimelate = meso-2,6-diaminopimelate. The protein operates within amino-acid biosynthesis; L-lysine biosynthesis via DAP pathway; DL-2,6-diaminopimelate from LL-2,6-diaminopimelate: step 1/1. In terms of biological role, catalyzes the stereoinversion of LL-2,6-diaminopimelate (L,L-DAP) to meso-diaminopimelate (meso-DAP), a precursor of L-lysine and an essential component of the bacterial peptidoglycan. In Mycobacterium bovis (strain ATCC BAA-935 / AF2122/97), this protein is Diaminopimelate epimerase.